We begin with the raw amino-acid sequence, 603 residues long: Sulfoacetaldehyde acetyltransferase (603 aa).

The protein belongs to the TPP enzyme family. As to quaternary structure, homodimer or homotetramer. The cofactor is Mg(2+). Thiamine diphosphate is required as a cofactor.

It is found in the cytoplasm. The enzyme catalyses acetyl phosphate + sulfite + H(+) = sulfoacetaldehyde + phosphate. The protein operates within organosulfur degradation; taurine degradation via aerobic pathway; acetyl phosphate and sulfite from taurine: step 2/2. This Alcaligenes xylosoxydans xylosoxydans (Achromobacter xylosoxidans) protein is Sulfoacetaldehyde acetyltransferase (xsc).